Reading from the N-terminus, the 1064-residue chain is Phosphatidylinositol 4,5-bisphosphate 3-kinase catalytic subunit beta isoform (1064 aa).

One can recognise a PI3K-ABD domain in the interval 20-109 (SDGAISVDFL…LPVLKLVTRS (90 aa)). Residues 188 to 279 (GGKLVVAVHF…RTLPHFILVE (92 aa)) form the PI3K-RBD domain. At serine 318 the chain carries Phosphoserine. In terms of domain architecture, C2 PI3K-type spans 323–490 (NNNPFQITLV…NATALHITFP (168 aa)). A Nuclear localization signal (NLS) motif is present at residues 404-412 (KVKTKKSTK). In terms of domain architecture, PIK helical spans 518–695 (ANVSSRGGKK…GVILEAYCRG (178 aa)). In terms of domain architecture, PI3K/PI4K catalytic spans 766-1047 (YVEKCKYMDS…KFDEALRESW (282 aa)). The segment at 772–778 (YMDSKMK) is G-loop. The catalytic loop stretch occupies residues 910 to 918 (GIGDRHSDN). Residues 929 to 955 (HIDFGHILGNFKSKFGIKRERVPFILT) are activation loop. Serine 1064 is subject to Phosphoserine; by autocatalysis.

It belongs to the PI3/PI4-kinase family. As to quaternary structure, heterodimer of a catalytic subunit PIK3CB and a p85 regulatory subunit (PIK3R1, PIK3R2 or PIK3R3). Interaction with PIK3R2 is required for nuclear localization and nuclear export. Part of a complex with PIK3R1 and PTEN. Binding to PTEN may antagonize the lipid kinase activity under normal growth conditions. Part of a complex involved in autophagosome formation composed of PIK3C3 and PIK3R4. Interacts with BECN1, ATG14 and RAB5A. Post-translationally, phosphorylation at Ser-1064 down-regulates lipid kinase activity. Autophosphorylation at Ser-1064 negatively regulates the phosphatidylinositol-4,5-bisphosphate 3-kinase activity.

The protein resides in the cytoplasm. It is found in the nucleus. The catalysed reaction is a 1,2-diacyl-sn-glycero-3-phospho-(1D-myo-inositol-4,5-bisphosphate) + ATP = a 1,2-diacyl-sn-glycero-3-phospho-(1D-myo-inositol-3,4,5-trisphosphate) + ADP + H(+). The enzyme catalyses 1-octadecanoyl-2-(5Z,8Z,11Z,14Z)-eicosatetraenoyl-sn-glycero-3-phospho-1D-myo-inositol 4,5-bisphosphate + ATP = 1-octadecanoyl-2-(5Z,8Z,11Z,14Z-eicosatetraenoyl)-sn-glycero-3-phospho-(1D-myo-inositol 3,4,5-triphosphate) + ADP + H(+). It catalyses the reaction L-seryl-[protein] + ATP = O-phospho-L-seryl-[protein] + ADP + H(+). Its pathway is phospholipid metabolism; phosphatidylinositol phosphate biosynthesis. Its function is as follows. Phosphoinositide-3-kinase (PI3K) phosphorylates phosphatidylinositol (PI) derivatives at position 3 of the inositol ring to produce 3-phosphoinositides. Uses ATP and PtdIns(4,5)P2 (phosphatidylinositol 4,5-bisphosphate) to generate phosphatidylinositol 3,4,5-trisphosphate (PIP3). PIP3 plays a key role by recruiting PH domain-containing proteins to the membrane, including AKT1 and PDPK1, activating signaling cascades involved in cell growth, survival, proliferation, motility and morphology. Involved in the activation of AKT1 upon stimulation by G-protein coupled receptors (GPCRs) ligands such as CXCL12, sphingosine 1-phosphate, and lysophosphatidic acid. May also act downstream receptor tyrosine kinases. Required in different signaling pathways for stable platelet adhesion and aggregation. Plays a role in platelet activation signaling triggered by GPCRs, alpha-IIb/beta-3 integrins (ITGA2B/ ITGB3) and ITAM (immunoreceptor tyrosine-based activation motif)-bearing receptors such as GP6. Regulates the strength of adhesion of ITGA2B/ ITGB3 activated receptors necessary for the cellular transmission of contractile forces. Required for platelet aggregation induced by F2 (thrombin) and thromboxane A2 (TXA2). Has a role in cell survival. May have a role in cell migration. Involved in the early stage of autophagosome formation. Modulates the intracellular level of PtdIns3P (phosphatidylinositol 3-phosphate) and activates PIK3C3 kinase activity. May act as a scaffold, independently of its lipid kinase activity to positively regulate autophagy. May have a role in insulin signaling as scaffolding protein in which the lipid kinase activity is not required. May have a kinase-independent function in regulating cell proliferation and in clathrin-mediated endocytosis. Mediator of oncogenic signal in cell lines lacking PTEN. The lipid kinase activity is necessary for its role in oncogenic transformation. Required for the growth of ERBB2 and RAS driven tumors. Also has a protein kinase activity showing autophosphorylation. In Mus musculus (Mouse), this protein is Phosphatidylinositol 4,5-bisphosphate 3-kinase catalytic subunit beta isoform (Pik3cb).